The primary structure comprises 437 residues: Trigger factor (437 aa).

A PPIase FKBP-type domain is found at 161–246; it reads DDQVNIDFVG…VNSVSAPVLP (86 aa).

It belongs to the FKBP-type PPIase family. Tig subfamily.

It localises to the cytoplasm. It catalyses the reaction [protein]-peptidylproline (omega=180) = [protein]-peptidylproline (omega=0). Functionally, involved in protein export. Acts as a chaperone by maintaining the newly synthesized protein in an open conformation. Functions as a peptidyl-prolyl cis-trans isomerase. The polypeptide is Trigger factor (Pseudomonas putida (strain ATCC 47054 / DSM 6125 / CFBP 8728 / NCIMB 11950 / KT2440)).